A 125-amino-acid chain; its full sequence is Histone H2B (125 aa).

Residues 1–32 form a disordered region; it reads MAPKVRAAKKGEKRVGKAKSGTAETAKRRRGK. Ser112 carries an O-linked (GlcNAc) serine glycan. Lys120 participates in a covalent cross-link: Glycyl lysine isopeptide (Lys-Gly) (interchain with G-Cter in ubiquitin).

This sequence belongs to the histone H2B family. The nucleosome is a histone octamer containing two molecules each of H2A, H2B, H3 and H4 assembled in one H3-H4 heterotetramer and two H2A-H2B heterodimers. The octamer wraps approximately 147 bp of DNA. Post-translationally, monoubiquitination of Lys-120 gives a specific tag for epigenetic transcriptional activation and is also prerequisite for histone H3 'Lys-4' and 'Lys-79' methylation. In terms of processing, glcNAcylation at Ser-112 promotes monoubiquitination of Lys-120. It fluctuates in response to extracellular glucose, and associates with transcribed genes.

The protein resides in the nucleus. It localises to the chromosome. In terms of biological role, core component of nucleosome. Nucleosomes wrap and compact DNA into chromatin, limiting DNA accessibility to the cellular machineries which require DNA as a template. Histones thereby play a central role in transcription regulation, DNA repair, DNA replication and chromosomal stability. DNA accessibility is regulated via a complex set of post-translational modifications of histones, also called histone code, and nucleosome remodeling. In Acropora formosa (Staghorn coral), this protein is Histone H2B.